The following is a 117-amino-acid chain: uncharacterized protein (117 aa).

Residues 1–19 (MTSNPSSSADQPLSGTTVP) show a composition bias toward polar residues. The tract at residues 1–28 (MTSNPSSSADQPLSGTTVPGSVPGKAPE) is disordered. 2 helical membrane-spanning segments follow: residues 38 to 58 (AAVW…LIFI) and 76 to 96 (LPLG…TVFA).

It localises to the cell membrane. This is an uncharacterized protein from Mycobacterium tuberculosis (strain ATCC 25618 / H37Rv).